Here is a 730-residue protein sequence, read N- to C-terminus: Elongation factor 2 (730 aa).

The region spanning 19–229 (LMIRNIGIVA…GVSFSEVFNY (211 aa)) is the tr-type G domain. GTP contacts are provided by residues 28–35 (AHIDHGKT), 94–98 (DTPGH), and 148–151 (NKVD). Position 596 is a diphthamide (histidine 596).

Belongs to the TRAFAC class translation factor GTPase superfamily. Classic translation factor GTPase family. EF-G/EF-2 subfamily.

It is found in the cytoplasm. Catalyzes the GTP-dependent ribosomal translocation step during translation elongation. During this step, the ribosome changes from the pre-translocational (PRE) to the post-translocational (POST) state as the newly formed A-site-bound peptidyl-tRNA and P-site-bound deacylated tRNA move to the P and E sites, respectively. Catalyzes the coordinated movement of the two tRNA molecules, the mRNA and conformational changes in the ribosome. This chain is Elongation factor 2 (fusA), found in Methanococcoides burtonii (strain DSM 6242 / NBRC 107633 / OCM 468 / ACE-M).